Consider the following 115-residue polypeptide: NADH-ubiquinone oxidoreductase chain 3 (115 aa).

A run of 3 helical transmembrane segments spans residues 4-24 (FIVLLVNISLASCLILIAFWL), 55-75 (FFLVAITFLLFDLEIALLLPL), and 87-107 (TMLTSFILVSVLAMGLAYEWL).

Belongs to the complex I subunit 3 family. In terms of assembly, core subunit of respiratory chain NADH dehydrogenase (Complex I) which is composed of 45 different subunits. Interacts with TMEM186. Interacts with TMEM242.

It is found in the mitochondrion inner membrane. It catalyses the reaction a ubiquinone + NADH + 5 H(+)(in) = a ubiquinol + NAD(+) + 4 H(+)(out). Functionally, core subunit of the mitochondrial membrane respiratory chain NADH dehydrogenase (Complex I) which catalyzes electron transfer from NADH through the respiratory chain, using ubiquinone as an electron acceptor. Essential for the catalytic activity of complex I. This Reithrodontomys megalotis (Western harvest mouse) protein is NADH-ubiquinone oxidoreductase chain 3.